A 156-amino-acid chain; its full sequence is 6,7-dimethyl-8-ribityllumazine synthase (156 aa).

5-amino-6-(D-ribitylamino)uracil is bound by residues Trp28, 60-62, and 82-84; these read SFE and VVV. Residue 87–88 participates in (2S)-2-hydroxy-3-oxobutyl phosphate binding; that stretch reads GT. His90 serves as the catalytic Proton donor. Phe115 contacts 5-amino-6-(D-ribitylamino)uracil. Arg129 lines the (2S)-2-hydroxy-3-oxobutyl phosphate pocket.

It belongs to the DMRL synthase family.

It carries out the reaction (2S)-2-hydroxy-3-oxobutyl phosphate + 5-amino-6-(D-ribitylamino)uracil = 6,7-dimethyl-8-(1-D-ribityl)lumazine + phosphate + 2 H2O + H(+). It participates in cofactor biosynthesis; riboflavin biosynthesis; riboflavin from 2-hydroxy-3-oxobutyl phosphate and 5-amino-6-(D-ribitylamino)uracil: step 1/2. Catalyzes the formation of 6,7-dimethyl-8-ribityllumazine by condensation of 5-amino-6-(D-ribitylamino)uracil with 3,4-dihydroxy-2-butanone 4-phosphate. This is the penultimate step in the biosynthesis of riboflavin. The protein is 6,7-dimethyl-8-ribityllumazine synthase of Kocuria rhizophila (strain ATCC 9341 / DSM 348 / NBRC 103217 / DC2201).